The sequence spans 213 residues: Thiamine-phosphate synthase (213 aa).

4-amino-2-methyl-5-(diphosphooxymethyl)pyrimidine is bound by residues 40–44 (QFREK) and asparagine 75. 2 residues coordinate Mg(2+): aspartate 76 and aspartate 95. Serine 113 contributes to the 4-amino-2-methyl-5-(diphosphooxymethyl)pyrimidine binding site. 139 to 141 (TPS) is a binding site for 2-[(2R,5Z)-2-carboxy-4-methylthiazol-5(2H)-ylidene]ethyl phosphate. Residue lysine 142 coordinates 4-amino-2-methyl-5-(diphosphooxymethyl)pyrimidine. 2-[(2R,5Z)-2-carboxy-4-methylthiazol-5(2H)-ylidene]ethyl phosphate-binding positions include glycine 171 and 191-192 (IS).

It belongs to the thiamine-phosphate synthase family. Mg(2+) serves as cofactor.

It carries out the reaction 2-[(2R,5Z)-2-carboxy-4-methylthiazol-5(2H)-ylidene]ethyl phosphate + 4-amino-2-methyl-5-(diphosphooxymethyl)pyrimidine + 2 H(+) = thiamine phosphate + CO2 + diphosphate. The catalysed reaction is 2-(2-carboxy-4-methylthiazol-5-yl)ethyl phosphate + 4-amino-2-methyl-5-(diphosphooxymethyl)pyrimidine + 2 H(+) = thiamine phosphate + CO2 + diphosphate. It catalyses the reaction 4-methyl-5-(2-phosphooxyethyl)-thiazole + 4-amino-2-methyl-5-(diphosphooxymethyl)pyrimidine + H(+) = thiamine phosphate + diphosphate. The protein operates within cofactor biosynthesis; thiamine diphosphate biosynthesis; thiamine phosphate from 4-amino-2-methyl-5-diphosphomethylpyrimidine and 4-methyl-5-(2-phosphoethyl)-thiazole: step 1/1. Functionally, condenses 4-methyl-5-(beta-hydroxyethyl)thiazole monophosphate (THZ-P) and 2-methyl-4-amino-5-hydroxymethyl pyrimidine pyrophosphate (HMP-PP) to form thiamine monophosphate (TMP). In Staphylococcus aureus (strain JH1), this protein is Thiamine-phosphate synthase.